The sequence spans 350 residues: NADH-quinone oxidoreductase subunit H (350 aa).

8 helical membrane-spanning segments follow: residues 5 to 25 (FIIE…IMAM), 76 to 96 (FLFV…SAVI), 118 to 138 (IALL…MIGG), 162 to 182 (IAMG…SLKV), 190 to 210 (MNWN…CSFA), 243 to 263 (LFAE…LFFG), 284 to 304 (LLGI…YMWV), and 319 to 339 (LGWR…GAVI).

The protein belongs to the complex I subunit 1 family. As to quaternary structure, NDH-1 is composed of 14 different subunits. Subunits NuoA, H, J, K, L, M, N constitute the membrane sector of the complex.

Its subcellular location is the cell inner membrane. The catalysed reaction is a quinone + NADH + 5 H(+)(in) = a quinol + NAD(+) + 4 H(+)(out). Functionally, NDH-1 shuttles electrons from NADH, via FMN and iron-sulfur (Fe-S) centers, to quinones in the respiratory chain. The immediate electron acceptor for the enzyme in this species is believed to be ubiquinone. Couples the redox reaction to proton translocation (for every two electrons transferred, four hydrogen ions are translocated across the cytoplasmic membrane), and thus conserves the redox energy in a proton gradient. This subunit may bind ubiquinone. This Flavobacterium johnsoniae (strain ATCC 17061 / DSM 2064 / JCM 8514 / BCRC 14874 / CCUG 350202 / NBRC 14942 / NCIMB 11054 / UW101) (Cytophaga johnsonae) protein is NADH-quinone oxidoreductase subunit H.